The primary structure comprises 91 residues: Ice-structuring protein (91 aa).

The N-terminal stretch at 1 to 21 (MALSLFTVGQLIFLFWTMRIT) is a signal peptide. Residues 22 to 39 (EANPDPAAKAVPAAAAPD) constitute a propeptide, removed by a dipeptidylpeptidase.

It belongs to the type-I AFP family.

It is found in the secreted. In terms of biological role, contributes to protect fish blood from freezing at subzero sea water temperatures. Lowers the blood freezing point. Binds to nascent ice crystals and prevents further growth. This chain is Ice-structuring protein, found in Pseudopleuronectes americanus (Winter flounder).